Consider the following 695-residue polypeptide: Lasso peptide isopeptidase AtxE2 (695 aa).

Positions 1-30 (MRSSKIRCPGAIRVGTLVTAFGCLPHVAFA) are cleaved as a signal peptide. 2 cysteine pairs are disulfide-bonded: C296/C301 and C354/C363. S527 (nucleophile) is an active-site residue. C551 and C552 are joined by a disulfide. Catalysis depends on charge relay system residues E610 and H638.

It localises to the cytoplasm. Functionally, lasso peptide isopeptidase that specifically hydrolyzes Astexin-2 and Astexin-3, converting them to linear peptides. Has only a few specific contacts with substrates, because it recognizes Astexin knotted structure (principally the loop structure). Its binding to lasso peptides opens them to expose the isopeptide bonds for hydrolysis. In Asticcacaulis excentricus (strain ATCC 15261 / DSM 4724 / KCTC 12464 / NCIMB 9791 / VKM B-1370 / CB 48), this protein is Lasso peptide isopeptidase AtxE2.